Consider the following 130-residue polypeptide: Small ribosomal subunit protein uS9 (130 aa).

Belongs to the universal ribosomal protein uS9 family.

The chain is Small ribosomal subunit protein uS9 from Burkholderia multivorans (strain ATCC 17616 / 249).